Reading from the N-terminus, the 396-residue chain is Flavohemoprotein (396 aa).

One can recognise a Globin domain in the interval M1–E136. H85 provides a ligand contact to heme b. Residues Y95 and E135 each act as charge relay system in the active site. The tract at residues G147–I396 is reductase. The region spanning R150–D255 is the FAD-binding FR-type domain. FAD-binding positions include Y188 and R204 to S207. G268–P273 provides a ligand contact to NADP(+). Position 389 to 392 (C389 to P392) interacts with FAD.

Belongs to the globin family. Two-domain flavohemoproteins subfamily. The protein in the C-terminal section; belongs to the flavoprotein pyridine nucleotide cytochrome reductase family. Heme b is required as a cofactor. FAD serves as cofactor.

It catalyses the reaction 2 nitric oxide + NADPH + 2 O2 = 2 nitrate + NADP(+) + H(+). The catalysed reaction is 2 nitric oxide + NADH + 2 O2 = 2 nitrate + NAD(+) + H(+). Functionally, is involved in NO detoxification in an aerobic process, termed nitric oxide dioxygenase (NOD) reaction that utilizes O(2) and NAD(P)H to convert NO to nitrate, which protects the bacterium from various noxious nitrogen compounds. Therefore, plays a central role in the inducible response to nitrosative stress. The protein is Flavohemoprotein of Photorhabdus laumondii subsp. laumondii (strain DSM 15139 / CIP 105565 / TT01) (Photorhabdus luminescens subsp. laumondii).